A 154-amino-acid chain; its full sequence is 6,7-dimethyl-8-ribityllumazine synthase (154 aa).

5-amino-6-(D-ribitylamino)uracil-binding positions include Phe22, 56-58 (SFE), and 80-82 (AVI). 85–86 (ST) provides a ligand contact to (2S)-2-hydroxy-3-oxobutyl phosphate. The active-site Proton donor is His88. Position 113 (Tyr113) interacts with 5-amino-6-(D-ribitylamino)uracil. (2S)-2-hydroxy-3-oxobutyl phosphate is bound at residue Arg127.

It belongs to the DMRL synthase family. Forms an icosahedral capsid composed of 60 subunits, arranged as a dodecamer of pentamers.

It catalyses the reaction (2S)-2-hydroxy-3-oxobutyl phosphate + 5-amino-6-(D-ribitylamino)uracil = 6,7-dimethyl-8-(1-D-ribityl)lumazine + phosphate + 2 H2O + H(+). It functions in the pathway cofactor biosynthesis; riboflavin biosynthesis; riboflavin from 2-hydroxy-3-oxobutyl phosphate and 5-amino-6-(D-ribitylamino)uracil: step 1/2. Catalyzes the formation of 6,7-dimethyl-8-ribityllumazine by condensation of 5-amino-6-(D-ribitylamino)uracil with 3,4-dihydroxy-2-butanone 4-phosphate. This is the penultimate step in the biosynthesis of riboflavin. The polypeptide is 6,7-dimethyl-8-ribityllumazine synthase (Sulfurihydrogenibium sp. (strain YO3AOP1)).